We begin with the raw amino-acid sequence, 20 residues long: VRDAYIAEDYDCVYHCARDA.

One can recognise an LCN-type CS-alpha/beta domain in the interval 2–20; that stretch reads RDAYIAEDYDCVYHCARDA.

The protein belongs to the long (4 C-C) scorpion toxin superfamily. Sodium channel inhibitor family. Alpha subfamily. As to expression, expressed by the venom gland.

The protein resides in the secreted. Binds to sodium channels (Nav) and inhibits the inactivation of the activated channels, thereby blocking neuronal transmission. This Olivierus martensii (Manchurian scorpion) protein is Neurotoxin BmK 18(2).